Reading from the N-terminus, the 360-residue chain is DNA replication and repair protein RecF (360 aa).

30–37 (GQNGSGKT) provides a ligand contact to ATP.

It belongs to the RecF family.

The protein resides in the cytoplasm. Its function is as follows. The RecF protein is involved in DNA metabolism; it is required for DNA replication and normal SOS inducibility. RecF binds preferentially to single-stranded, linear DNA. It also seems to bind ATP. This chain is DNA replication and repair protein RecF, found in Shewanella sp. (strain MR-4).